Reading from the N-terminus, the 122-residue chain is Large ribosomal subunit protein uL14c (122 aa).

The protein belongs to the universal ribosomal protein uL14 family. Part of the 50S ribosomal subunit.

The protein resides in the plastid. It is found in the chloroplast. Its function is as follows. Binds to 23S rRNA. The polypeptide is Large ribosomal subunit protein uL14c (Huperzia lucidula (Shining clubmoss)).